Consider the following 275-residue polypeptide: Rhamnulose-1-phosphate aldolase (275 aa).

Residue E117 is part of the active site. Zn(2+) contacts are provided by H141, H143, and H212.

This sequence belongs to the aldolase class II family. RhaD subfamily. Homotetramer. Requires Zn(2+) as cofactor.

Its subcellular location is the cytoplasm. The enzyme catalyses L-rhamnulose 1-phosphate = (S)-lactaldehyde + dihydroxyacetone phosphate. It functions in the pathway carbohydrate degradation; L-rhamnose degradation; glycerone phosphate from L-rhamnose: step 3/3. In terms of biological role, catalyzes the reversible cleavage of L-rhamnulose-1-phosphate to dihydroxyacetone phosphate (DHAP) and L-lactaldehyde. This Citrobacter koseri (strain ATCC BAA-895 / CDC 4225-83 / SGSC4696) protein is Rhamnulose-1-phosphate aldolase.